A 749-amino-acid chain; its full sequence is NAD(P)H-quinone oxidoreductase subunit 5, chloroplastic (749 aa).

16 helical membrane passes run 9 to 29 (WIIP…LLLF), 40 to 60 (WSFT…NLSI), 89 to 109 (IDPL…MVLI), 125 to 145 (FAYM…SNLI), 147 to 167 (IYIF…FWFT), 185 to 205 (GDFG…SFEF), 221 to 241 (NGTN…GAVA), 260 to 280 (TPIS…FLVA), 285 to 305 (LFIV…ITIL), 329 to 349 (LGYT…FHLI), 356 to 376 (ALLF…VGYS), 398 to 418 (NTFL…CFWS), 427 to 447 (WLYS…TAFY), 553 to 573 (LFPL…GIPF), 607 to 627 (FVIN…LASL), and 727 to 747 (SYLF…YFFL).

Belongs to the complex I subunit 5 family. NDH is composed of at least 16 different subunits, 5 of which are encoded in the nucleus.

It localises to the plastid. Its subcellular location is the chloroplast thylakoid membrane. The enzyme catalyses a plastoquinone + NADH + (n+1) H(+)(in) = a plastoquinol + NAD(+) + n H(+)(out). It catalyses the reaction a plastoquinone + NADPH + (n+1) H(+)(in) = a plastoquinol + NADP(+) + n H(+)(out). NDH shuttles electrons from NAD(P)H:plastoquinone, via FMN and iron-sulfur (Fe-S) centers, to quinones in the photosynthetic chain and possibly in a chloroplast respiratory chain. The immediate electron acceptor for the enzyme in this species is believed to be plastoquinone. Couples the redox reaction to proton translocation, and thus conserves the redox energy in a proton gradient. The chain is NAD(P)H-quinone oxidoreductase subunit 5, chloroplastic (ndhF) from Vitis vinifera (Grape).